Here is a 58-residue protein sequence, read N- to C-terminus: Probable mRNA interferase HicA 2 (58 aa).

It belongs to the HicA mRNA interferase family. In terms of assembly, probably forms a complex with the cognate antitoxin HicB 2 which inhibits the mRNA interferase activity.

In terms of biological role, toxic component of a type II toxin-antitoxin (TA) system. A probable translation-independent mRNA interferase. The sequence is that of Probable mRNA interferase HicA 2 (hicA2) from Photorhabdus laumondii subsp. laumondii (strain DSM 15139 / CIP 105565 / TT01) (Photorhabdus luminescens subsp. laumondii).